A 123-amino-acid polypeptide reads, in one-letter code: Small ribosomal subunit protein uS13c (123 aa).

Positions 89-123 (RGKRHRNNLPVRGQRTRTNARSRRGSKKTVTGKKK) are disordered. Basic residues predominate over residues 102–123 (QRTRTNARSRRGSKKTVTGKKK).

This sequence belongs to the universal ribosomal protein uS13 family. Part of the 30S ribosomal subunit.

Its subcellular location is the plastid. The protein resides in the chloroplast. Its function is as follows. Located at the top of the head of the 30S subunit, it contacts several helices of the 16S rRNA. This chain is Small ribosomal subunit protein uS13c, found in Phaeodactylum tricornutum (strain CCAP 1055/1).